The following is a 359-amino-acid chain: Methylthioribose-1-phosphate isomerase (359 aa).

Substrate is bound by residues 52–54, arginine 90, and glutamine 200; that span reads RGA. Aspartate 241 acts as the Proton donor in catalysis. 251 to 252 serves as a coordination point for substrate; that stretch reads NK.

The protein belongs to the eIF-2B alpha/beta/delta subunits family. MtnA subfamily.

The enzyme catalyses 5-(methylsulfanyl)-alpha-D-ribose 1-phosphate = 5-(methylsulfanyl)-D-ribulose 1-phosphate. The protein operates within amino-acid biosynthesis; L-methionine biosynthesis via salvage pathway; L-methionine from S-methyl-5-thio-alpha-D-ribose 1-phosphate: step 1/6. Catalyzes the interconversion of methylthioribose-1-phosphate (MTR-1-P) into methylthioribulose-1-phosphate (MTRu-1-P). This is Methylthioribose-1-phosphate isomerase from Sulfurimonas denitrificans (strain ATCC 33889 / DSM 1251) (Thiomicrospira denitrificans (strain ATCC 33889 / DSM 1251)).